The chain runs to 108 residues: UPF0060 membrane protein YnfA (108 aa).

Residues 1–5 (MIKTT) lie on the Periplasmic side of the membrane. Residues 6–26 (LLFFATALCEIIGCFLPWLWL) form a helical membrane-spanning segment. Residues 27 to 30 (KRNA) lie on the Cytoplasmic side of the membrane. Residues 31–51 (SIWLLLPAGISLALFVWLLTL) form a helical membrane-spanning segment. At 52–60 (HPAASGRIY) the chain is on the periplasmic side. A helical membrane pass occupies residues 61–81 (AAYGGVYVCTALMWLRVVDGV). Over 82-84 (KLT) the chain is Cytoplasmic. A helical membrane pass occupies residues 85–105 (LYDWTGALIALCGMLIIVAGW). Over 106–108 (GRT) the chain is Periplasmic.

Belongs to the UPF0060 family.

It localises to the cell inner membrane. The protein is UPF0060 membrane protein YnfA of Shigella dysenteriae serotype 1 (strain Sd197).